The primary structure comprises 92 residues: Small ribosomal subunit protein uS19 (92 aa).

This sequence belongs to the universal ribosomal protein uS19 family.

Its function is as follows. Protein S19 forms a complex with S13 that binds strongly to the 16S ribosomal RNA. The chain is Small ribosomal subunit protein uS19 from Rickettsia bellii (strain OSU 85-389).